The sequence spans 137 residues: MFLFLPIPLNVQDIWKVNSKYKHVLLTCPVCQNKTVRVYRLVKSLALIVLPVLPVYTSKVLRCSHCGWYEPVDSAMIDQRRRREDLPTPERPEASAQQHAFFPGSSSQQTDIPNVRPQPHIPPPRKSDEAPPPYSYK.

Positions 79–93 (QRRRREDLPTPERPE) are enriched in basic and acidic residues. The interval 79-137 (QRRRREDLPTPERPEASAQQHAFFPGSSSQQTDIPNVRPQPHIPPPRKSDEAPPPYSYK) is disordered. The span at 119–137 (PHIPPPRKSDEAPPPYSYK) shows a compositional bias: pro residues.

This sequence belongs to the UPF0768 family.

The polypeptide is UPF0768 protein C1952.04c (Schizosaccharomyces pombe (strain 972 / ATCC 24843) (Fission yeast)).